The following is a 713-amino-acid chain: Polyribonucleotide nucleotidyltransferase (713 aa).

Mg(2+) contacts are provided by aspartate 491 and aspartate 497. A KH domain is found at 558–617; sequence PRMITIKINPEKIRDVIGKGGSVIRALTEETGTTIDISDDGVVTIASTSSDGMAEAKKRI. The S1 motif domain occupies 627 to 695; that stretch reads GQVYEGTVLK…EKGRVRLSAK (69 aa).

Belongs to the polyribonucleotide nucleotidyltransferase family. Requires Mg(2+) as cofactor.

The protein localises to the cytoplasm. It carries out the reaction RNA(n+1) + phosphate = RNA(n) + a ribonucleoside 5'-diphosphate. Functionally, involved in mRNA degradation. Catalyzes the phosphorolysis of single-stranded polyribonucleotides processively in the 3'- to 5'-direction. This Burkholderia cenocepacia (strain ATCC BAA-245 / DSM 16553 / LMG 16656 / NCTC 13227 / J2315 / CF5610) (Burkholderia cepacia (strain J2315)) protein is Polyribonucleotide nucleotidyltransferase.